A 542-amino-acid chain; its full sequence is CTP synthase (542 aa).

Residues 1-265 form an amidoligase domain region; sequence MARYVFITGG…DNEVLAAFGI (265 aa). S13 is a binding site for CTP. S13 is a binding site for UTP. Residues 14 to 19 and D71 contribute to the ATP site; that span reads SLGKGI. Mg(2+) contacts are provided by D71 and E139. Residues 146–148, 186–191, and K222 contribute to the CTP site; these read DIE and KTKPTQ. UTP contacts are provided by residues 186-191 and K222; that span reads KTKPTQ. The Glutamine amidotransferase type-1 domain maps to 291–541; it reads TIAIVGKYTG…IEAALEQSRL (251 aa). G353 contributes to the L-glutamine binding site. C380 acts as the Nucleophile; for glutamine hydrolysis in catalysis. L-glutamine-binding positions include 381 to 384, E404, and R469; that span reads FGMQ. Catalysis depends on residues H514 and E516.

The protein belongs to the CTP synthase family. Homotetramer.

It catalyses the reaction UTP + L-glutamine + ATP + H2O = CTP + L-glutamate + ADP + phosphate + 2 H(+). The enzyme catalyses L-glutamine + H2O = L-glutamate + NH4(+). The catalysed reaction is UTP + NH4(+) + ATP = CTP + ADP + phosphate + 2 H(+). The protein operates within pyrimidine metabolism; CTP biosynthesis via de novo pathway; CTP from UDP: step 2/2. Its activity is regulated as follows. Allosterically activated by GTP, when glutamine is the substrate; GTP has no effect on the reaction when ammonia is the substrate. The allosteric effector GTP functions by stabilizing the protein conformation that binds the tetrahedral intermediate(s) formed during glutamine hydrolysis. Inhibited by the product CTP, via allosteric rather than competitive inhibition. In terms of biological role, catalyzes the ATP-dependent amination of UTP to CTP with either L-glutamine or ammonia as the source of nitrogen. Regulates intracellular CTP levels through interactions with the four ribonucleotide triphosphates. This chain is CTP synthase, found in Sinorhizobium medicae (strain WSM419) (Ensifer medicae).